The sequence spans 117 residues: Large ribosomal subunit protein uL18 (117 aa).

The protein belongs to the universal ribosomal protein uL18 family. In terms of assembly, part of the 50S ribosomal subunit; part of the 5S rRNA/L5/L18/L25 subcomplex. Contacts the 5S and 23S rRNAs.

This is one of the proteins that bind and probably mediate the attachment of the 5S RNA into the large ribosomal subunit, where it forms part of the central protuberance. This is Large ribosomal subunit protein uL18 from Actinobacillus pleuropneumoniae serotype 5b (strain L20).